The sequence spans 37 residues: MKVRPSVKPICEKCKVIRRKGTVMVICENPKHKQKQG.

Belongs to the bacterial ribosomal protein bL36 family.

The protein is Large ribosomal subunit protein bL36 of Halalkalibacterium halodurans (strain ATCC BAA-125 / DSM 18197 / FERM 7344 / JCM 9153 / C-125) (Bacillus halodurans).